Reading from the N-terminus, the 175-residue chain is Replication restart protein PriC (175 aa).

This sequence belongs to the PriC family. In terms of assembly, monomer. Oligomerizes in the absence of DNA. Component of the replication restart primosome, which is composed of PriA, PriB, PriC, DnaB and DnaT; DnaG primase associates transiently with this complex. Interacts with the C-terminus of SSB; this interaction is required for DnaB loading onto substrate replication forks. Interacts with DnaB alone and in the DnaB-DnaC complex, probably 1:1 binding with DnaB.

Its function is as follows. Involved in the restart of stalled replication forks, which reloads the replicative helicase (DnaB) on sites other than the origin of replication. Recognizes abandoned replication forks and remodels DNA single-stranded binding protein (SSB) on ssDNA to uncover a loading site for DnaB. There are several restart pathways, the PriA-PriC pathway is a minor restart pathway. Also part of the minor PriC-Rep pathway for restart of stalled replication forks, which has a different substrate specificity than PriA. priB and priC have redundant roles in the cell. Stimulates the 3'-5' helicase activity of Rep helicase in vitro. In vitro can load the DnaB replicative helicase from a DnaB-DnaC complex on an SSB-coated stalled replication fork with no leading- or lagging-strand (or with a gap between the leading strand and fork junction) in the absence of other primosome proteins (PriA, PriB or DnaT). Also part of the major restart pathway with PriA, PriB, DnaB, DnaT and DnaG primase. PriC may contribute to the stability of the preprimosome complex. Preferentially binds approximately 7-9 nucleotides of single-stranded (ss)DNA, also binds double-stranded (ds)DNA. PriB is probably more important in the cell than PriC. This chain is Replication restart protein PriC, found in Escherichia coli (strain K12).